Consider the following 555-residue polypeptide: La-related protein 7 (555 aa).

Positions 36 to 127 (RSRVKQLLSD…RRKEPLGETP (92 aa)) constitute an HTH La-type RNA-binding domain. The RRM domain maps to 133-211 (RTVYVELLPK…PRKPGIFPKT (79 aa)). Residues 218-327 (PFDAVTQDND…ENKDEELNSL (110 aa)) are disordered. Composition is skewed to polar residues over residues 238–251 (KNST…NNMD), 258–274 (STVT…STVS), and 284–293 (SQSFEASSGE). The stretch at 295-356 (QFEMSSKMRK…ERLKVGEEVI (62 aa)) forms a coiled coil. Basic and acidic residues predominate over residues 303-327 (RKVEEEKSELKDLSSENKDEELNSL). Residues 425-538 (EFLSGVIVKI…TEKLISKAEK (114 aa)) form the xRRM domain.

It belongs to the LARP7 family. Core component of the 7SK RNP complex. Associates with box C/D small nucleolar ribonucleoprotein (snoRNP) complexes.

The protein resides in the nucleus. The protein localises to the nucleoplasm. Functionally, RNA-binding protein that specifically binds distinct small nuclear RNA (snRNAs) and regulates their processing and function. Specifically binds the 7SK snRNA (7SK RNA) and acts as a core component of the 7SK ribonucleoprotein (RNP) complex, thereby acting as a negative regulator of transcription elongation by RNA polymerase II. The 7SK RNP complex sequesters the positive transcription elongation factor b (P-TEFb) in a large inactive 7SK RNP complex preventing RNA polymerase II phosphorylation and subsequent transcriptional elongation. The 7SK RNP complex also promotes snRNA gene transcription by RNA polymerase II via interaction with the little elongation complex (LEC). LARP7 specifically binds to the highly conserved 3'-terminal U-rich stretch of 7SK RNA; on stimulation, remains associated with 7SK RNA, whereas P-TEFb is released from the complex. LARP7 also acts as a regulator of mRNA splicing fidelity by promoting U6 snRNA processing. Specifically binds U6 snRNAs and associates with a subset of box C/D RNP complexes: promotes U6 snRNA 2'-O-methylation by facilitating U6 snRNA loading into box C/D RNP complexes. U6 snRNA 2'-O-methylation is required for mRNA splicing fidelity. The sequence is that of La-related protein 7 from Danio rerio (Zebrafish).